Consider the following 347-residue polypeptide: Transcription elongation factor A protein 3 (347 aa).

One can recognise a TFIIS N-terminal domain in the interval 5–82 (EELLRIAKKL…KNWKRLLDSP (78 aa)). Residues 83-100 (RTTKGEREEREKAKKEKG) are compositionally biased toward basic and acidic residues. The segment at 83–168 (RTTKGEREER…TTPSSPSTPT (86 aa)) is disordered. Serine 113 carries the phosphoserine modification. Basic and acidic residues predominate over residues 119–131 (GGGEPKTRRDSVD). Composition is skewed to low complexity over residues 132-142 (SRSSTTSSPKR) and 157-168 (TPTTPSSPSTPT). Serine 139 carries the post-translational modification Phosphoserine. The region spanning 186–302 (VRDKCVEMLS…EHQMAKTGGT (117 aa)) is the TFIIS central domain. Residues 305-345 (DLLRCSKCKKKNCTYNQVQTRSADEPMTTFVLCNECGNRWK) form a TFIIS-type zinc finger. 4 residues coordinate Zn(2+): cysteine 309, cysteine 312, cysteine 337, and cysteine 340.

The protein belongs to the TFS-II family. In terms of tissue distribution, liver, kidney and heart.

The protein localises to the nucleus. Functionally, necessary for efficient RNA polymerase II transcription elongation past template-encoded arresting sites. The arresting sites in DNA have the property of trapping a certain fraction of elongating RNA polymerases that pass through, resulting in locked ternary complexes. Cleavage of the nascent transcript by S-II allows the resumption of elongation from the new 3'-terminus. In Mus musculus (Mouse), this protein is Transcription elongation factor A protein 3 (Tcea3).